The following is a 99-amino-acid chain: IEVLLGSDDGGLAFVPGNFSISAGEKITFKNNAGFPHNVVFDEDEIPAGVDASKISMPEEDLLNAPGETYSVTLSEKGTYSFYCSPHQGAGMVGKVTVN.

Positions 1 to 99 constitute a Plastocyanin-like domain; sequence IEVLLGSDDG…AGMVGKVTVN (99 aa). Cu cation is bound by residues histidine 37, cysteine 84, histidine 87, and methionine 92.

The protein belongs to the plastocyanin family. Cu(2+) is required as a cofactor.

The protein localises to the plastid. It localises to the chloroplast thylakoid membrane. Participates in electron transfer between P700 and the cytochrome b6-f complex in photosystem I. This Solanum crispum (Chilean potato-tree) protein is Plastocyanin (PETE).